We begin with the raw amino-acid sequence, 1587 residues long: Sister chromatid cohesion protein mis4 (1587 aa).

The segment at 140–172 (PKEKPDASSINTNRSSSDNGFLTPSSSPRSPSC) is disordered. The segment covering 147–162 (SSINTNRSSSDNGFLT) has biased composition (polar residues). Over residues 163 to 172 (PSSSPRSPSC) the composition is skewed to low complexity. The residue at position 183 (Ser183) is a Phosphoserine. HEAT repeat units follow at residues 775-812 (LNLKFFVSLIIGFLDSPQASLRTKCLRIINQMKTIPSI), 814-851 (RTHPEVLAQIISKSNDQSAIVRDTVLDLLGTYIMAYRE), 853-888 (IPQIYGCIISGISDPSTIVRKRAIKQLCEVYEATED), 890-927 (NIRVDIASKLLTRSNDEEETISELSLEVLEKLWFSPAS), 1101-1140 (ATLMEIVPCLCSLFTRLNDYERLKKIVVSCLKSLEEARHS), and 1183-1220 (DAYVILLGYFQKLLKDAKGQLRIHIIDNMSRICLRETS).

Belongs to the SCC2/Nipped-B family. In terms of assembly, interacts with ssl3.

The protein resides in the nucleus. The protein localises to the chromosome. Functionally, plays a structural role in chromatin. Chromatid cohesion molecule required for equal sister chromatid separation in anaphase. May form a stable link between chromatids in S phase that is split rather than removed in anaphase. Also required for spindle-kinetochore interaction in early mitosis and inhibit sister chromatid separation until the cleavage of Rad21 in anaphase. This Schizosaccharomyces pombe (strain 972 / ATCC 24843) (Fission yeast) protein is Sister chromatid cohesion protein mis4 (mis4).